The sequence spans 579 residues: YTH domain-containing family protein 2 (579 aa).

The disordered stretch occupies residues 1–45 (MSASSLLEQRPKGQGNKVQNGSVHQKDGLNDDDFEPYLSPQARPN). Position 2 is an N-acetylserine (Ser-2). Phosphoserine occurs at positions 2, 4, 5, 22, 39, and 196. The segment at 2 to 384 (SASSLLEQRP…QAGSGSTPSE (383 aa)) is localization to mRNA processing bodies (P-bodies). The segment at 247 to 387 (AKQQPKLKTK…SGSTPSEPHP (141 aa)) is disordered. Residues 291-316 (ALVQNIGQPTQGSPQPVGQQANNSPP) are compositionally biased toward polar residues. Positions 337–349 (AQLSVQQQAAQPT) are enriched in low complexity. Ser-359 is subject to Phosphoserine. Gly residues predominate over residues 359-371 (SGFGHNGVDGNGV). Over residues 372-383 (GQSQAGSGSTPS) the composition is skewed to polar residues. The interaction with m6A-containing mRNAs stretch occupies residues 385-579 (PHPVLEKLRS…VKKERQGRGK (195 aa)). Phosphoserine is present on Ser-394. The YTH domain occupies 410–544 (GRVFIIKSYS…EKAKQVLKII (135 aa)). Residues 416–418 (KSY), Asp-422, 432–433 (WC), Asn-462, Trp-486, and Trp-491 contribute to the RNA site.

This sequence belongs to the YTHDF family. YTHDF2 subfamily. Interacts with CNOT1; interaction is direct and promotes recruitment of the CCR4-NOT complex. Interacts with YTHDF3. Interacts with RIDA/HRSP12; interaction leads to recruitment of the ribonuclease P/MRP complex. Ubiquitinated by the SCF(SKP2) complex, leading to its degradation. Widely expressed, with highest expression in testis.

Its subcellular location is the cytoplasm. It is found in the cytosol. The protein resides in the P-body. The protein localises to the stress granule. It localises to the nucleus. Specifically recognizes and binds N6-methyladenosine (m6A)-containing RNAs, and regulates their stability. M6A is a modification present at internal sites of mRNAs and some non-coding RNAs and plays a role in mRNA stability and processing. Acts as a regulator of mRNA stability by promoting degradation of m6A-containing mRNAs via interaction with the CCR4-NOT and ribonuclease P/MRP complexes, depending on the context. The YTHDF paralogs (YTHDF1, YTHDF2 and YTHDF3) share m6A-containing mRNAs targets and act redundantly to mediate mRNA degradation and cellular differentiation. M6A-containing mRNAs containing a binding site for RIDA/HRSP12 (5'-GGUUC-3') are preferentially degraded by endoribonucleolytic cleavage: cooperative binding of RIDA/HRSP12 and YTHDF2 to transcripts leads to recruitment of the ribonuclease P/MRP complex. Other m6A-containing mRNAs undergo deadenylation via direct interaction between YTHDF2 and CNOT1, leading to recruitment of the CCR4-NOT and subsequent deadenylation of m6A-containing mRNAs. Required maternally to regulate oocyte maturation: probably acts by binding to m6A-containing mRNAs, thereby regulating maternal transcript dosage during oocyte maturation, which is essential for the competence of oocytes to sustain early zygotic development. Also required during spermatogenesis: regulates spermagonial adhesion by promoting degradation of m6A-containing transcripts coding for matrix metallopeptidases. Also involved in hematopoietic stem cells specification by binding to m6A-containing mRNAs, leading to promote their degradation. Also acts as a regulator of neural development by promoting m6A-dependent degradation of neural development-related mRNA targets. Inhibits neural specification of induced pluripotent stem cells by binding to methylated neural-specific mRNAs and promoting their degradation, thereby restraining neural differentiation. Regulates circadian regulation of hepatic lipid metabolism: acts by promoting m6A-dependent degradation of PPARA transcripts. Regulates the innate immune response to infection by inhibiting the type I interferon response: acts by binding to m6A-containing IFNB transcripts and promoting their degradation. May also act as a promoter of cap-independent mRNA translation following heat shock stress: upon stress, relocalizes to the nucleus and specifically binds mRNAs with some m6A methylation mark at their 5'-UTR, protecting demethylation of mRNAs by FTO, thereby promoting cap-independent mRNA translation. Regulates mitotic entry by promoting the phase-specific m6A-dependent degradation of WEE1 transcripts. Promotes formation of phase-separated membraneless compartments, such as P-bodies or stress granules, by undergoing liquid-liquid phase separation upon binding to mRNAs containing multiple m6A-modified residues: polymethylated mRNAs act as a multivalent scaffold for the binding of YTHDF proteins, juxtaposing their disordered regions and thereby leading to phase separation. The resulting mRNA-YTHDF complexes then partition into different endogenous phase-separated membraneless compartments, such as P-bodies, stress granules or neuronal RNA granules. May also recognize and bind RNAs modified by C5-methylcytosine (m5C) and act as a regulator of rRNA processing. The sequence is that of YTH domain-containing family protein 2 from Mus musculus (Mouse).